The primary structure comprises 349 residues: Probable formaldehyde dehydrogenase AdhA (349 aa).

Positions 44, 66, 97, 100, 103, 111, and 161 each coordinate Zn(2+).

It belongs to the zinc-containing alcohol dehydrogenase family. Requires Zn(2+) as cofactor.

Its function is as follows. Functions in the protection against aldehyde-stress. This is Probable formaldehyde dehydrogenase AdhA (adhA) from Bacillus subtilis (strain 168).